Consider the following 783-residue polypeptide: BMP/retinoic acid-inducible neural-specific protein 2 (783 aa).

The signal sequence occupies residues 1–33; sequence MRWPCSSWFRGLWPEAAPWAVLLALGVPGWVLA. Positions 85-281 constitute an MACPF domain; that stretch reads RYRIYREFAR…FVAAALSYIT (197 aa). N185, N354, N473, N579, N626, and N658 each carry an N-linked (GlcNAc...) asparagine glycan.

The protein belongs to the BRINP family. In terms of tissue distribution, weakly expressed in embryonic stem (ES) cells. Strongly expressed in ES-derived neural stem cells (NSCs).

The protein resides in the secreted. Its function is as follows. Inhibits neuronal cell proliferation by negative regulation of the cell cycle transition. The polypeptide is BMP/retinoic acid-inducible neural-specific protein 2 (Brinp2) (Mus musculus (Mouse)).